Consider the following 82-residue polypeptide: ATP synthase subunit c (82 aa).

A run of 2 helical transmembrane segments spans residues 7–27 (FVAL…CIGI) and 53–73 (FLLA…AMMF).

It belongs to the ATPase C chain family. As to quaternary structure, F-type ATPases have 2 components, F(1) - the catalytic core - and F(0) - the membrane proton channel. F(1) has five subunits: alpha(3), beta(3), gamma(1), delta(1), epsilon(1). F(0) has three main subunits: a(1), b(2) and c(10-14). The alpha and beta chains form an alternating ring which encloses part of the gamma chain. F(1) is attached to F(0) by a central stalk formed by the gamma and epsilon chains, while a peripheral stalk is formed by the delta and b chains.

Its subcellular location is the cell inner membrane. F(1)F(0) ATP synthase produces ATP from ADP in the presence of a proton or sodium gradient. F-type ATPases consist of two structural domains, F(1) containing the extramembraneous catalytic core and F(0) containing the membrane proton channel, linked together by a central stalk and a peripheral stalk. During catalysis, ATP synthesis in the catalytic domain of F(1) is coupled via a rotary mechanism of the central stalk subunits to proton translocation. Functionally, key component of the F(0) channel; it plays a direct role in translocation across the membrane. A homomeric c-ring of between 10-14 subunits forms the central stalk rotor element with the F(1) delta and epsilon subunits. The polypeptide is ATP synthase subunit c (Aromatoleum aromaticum (strain DSM 19018 / LMG 30748 / EbN1) (Azoarcus sp. (strain EbN1))).